Reading from the N-terminus, the 608-residue chain is UvrABC system protein C (608 aa).

The GIY-YIG domain maps to Asn-16 to Ile-94. The UVR domain occupies Asn-204–Val-239.

This sequence belongs to the UvrC family. Interacts with UvrB in an incision complex.

Its subcellular location is the cytoplasm. Functionally, the UvrABC repair system catalyzes the recognition and processing of DNA lesions. UvrC both incises the 5' and 3' sides of the lesion. The N-terminal half is responsible for the 3' incision and the C-terminal half is responsible for the 5' incision. The sequence is that of UvrABC system protein C from Pseudomonas aeruginosa (strain ATCC 15692 / DSM 22644 / CIP 104116 / JCM 14847 / LMG 12228 / 1C / PRS 101 / PAO1).